Here is a 1205-residue protein sequence, read N- to C-terminus: Centrosome and spindle pole associated protein 1 (1205 aa).

2 coiled-coil regions span residues 12–34 (QKAK…EMKG) and 87–108 (KLKE…TQAK). A disordered region spans residues 16-37 (LAKDKAELESDPPYMEMKGKAS). Over residues 158–173 (STEKVRQVEKNIEPKS) the composition is skewed to basic and acidic residues. Disordered stretches follow at residues 158–187 (STEK…KSDL), 222–277 (SRRP…PGVS), and 380–467 (QQKK…GSTL). The segment covering 176-187 (NKNPISQGKSDL) has biased composition (polar residues). Composition is skewed to basic and acidic residues over residues 222 to 233 (SRRPLKQTKEEV) and 257 to 275 (ANGE…RDPG). Residues 357–391 (EDRELTKRRKEKYRQELLEQIAEQQKKKRREKDLA) are a coiled coil. Basic and acidic residues-rich tracts occupy residues 401-410 (DPEKSPDRLK) and 417-428 (RHFEEMPPERPR). S405 carries the phosphoserine modification. Pro residues predominate over residues 433–447 (TPPPPFSAPSSPSVP). The stretch at 574 to 618 (STQSLQSYQEALQEQIREREARRKKERLEKEEYEAKLEAEMRIYN) forms a coiled coil. Residues 677–704 (AENLEDSANKNSGPLQTQSSPFARGNTF) are disordered. Positions 685–697 (NKNSGPLQTQSSP) are enriched in polar residues. The stretch at 724 to 813 (RFQIEEKRQR…EKHNLQLQHY (90 aa)) forms a coiled coil. A phosphoserine mark is found at S850 and S869. A disordered region spans residues 862–881 (SSMSRAQSPPVPARKNQLRA). Residues 874–911 (ARKNQLRAEEEKKNVIMELSEMRKQLRSEERRLQGRLL) adopt a coiled-coil conformation. S915 bears the Phosphoserine mark. Positions 993 to 1014 (QQQALLREQQKRLNRIKMRRDA) form a coiled coil. Disordered stretches follow at residues 1086–1105 (GLDF…SLKS), 1124–1169 (RLTE…RPGT), and 1182–1205 (NEEQ…AAHA). Over residues 1124–1134 (RLTEQQKKPTN) the composition is skewed to basic and acidic residues. Residues 1135–1145 (TDDEGSLVDPD) show a composition bias toward acidic residues. Basic and acidic residues predominate over residues 1146-1156 (DIMRHLSDDGR).

In terms of assembly, interacts with PLEKHG6. Interacts with ARMC9, TOGARAM1, CCDC66, CEP104 and CEP290. In terms of processing, phosphorylated. Phosphorylation increases in colcemide-treated cells.

It is found in the cytoplasm. The protein localises to the cytoskeleton. Its subcellular location is the microtubule organizing center. It localises to the centrosome. The protein resides in the spindle. It is found in the spindle pole. The protein localises to the cell projection. Its subcellular location is the cilium. May play a role in cell-cycle-dependent microtubule organization. The sequence is that of Centrosome and spindle pole associated protein 1 (Cspp1) from Mus musculus (Mouse).